The sequence spans 381 residues: Probable tRNA sulfurtransferase (381 aa).

Residues 68 to 176 form the THUMP domain; that stretch reads DLALKLLKKV…NDGAYIFTEK (109 aa). ATP-binding positions include 194 to 195, K276, G298, and Q307; that span reads LI.

Belongs to the ThiI family.

It is found in the cytoplasm. It catalyses the reaction [ThiI sulfur-carrier protein]-S-sulfanyl-L-cysteine + a uridine in tRNA + 2 reduced [2Fe-2S]-[ferredoxin] + ATP + H(+) = [ThiI sulfur-carrier protein]-L-cysteine + a 4-thiouridine in tRNA + 2 oxidized [2Fe-2S]-[ferredoxin] + AMP + diphosphate. It carries out the reaction [ThiS sulfur-carrier protein]-C-terminal Gly-Gly-AMP + S-sulfanyl-L-cysteinyl-[cysteine desulfurase] + AH2 = [ThiS sulfur-carrier protein]-C-terminal-Gly-aminoethanethioate + L-cysteinyl-[cysteine desulfurase] + A + AMP + 2 H(+). The protein operates within cofactor biosynthesis; thiamine diphosphate biosynthesis. Functionally, catalyzes the ATP-dependent transfer of a sulfur to tRNA to produce 4-thiouridine in position 8 of tRNAs, which functions as a near-UV photosensor. Also catalyzes the transfer of sulfur to the sulfur carrier protein ThiS, forming ThiS-thiocarboxylate. This is a step in the synthesis of thiazole, in the thiamine biosynthesis pathway. The sulfur is donated as persulfide by IscS. This is Probable tRNA sulfurtransferase from Methanocaldococcus jannaschii (strain ATCC 43067 / DSM 2661 / JAL-1 / JCM 10045 / NBRC 100440) (Methanococcus jannaschii).